Reading from the N-terminus, the 292-residue chain is Acetylglutamate kinase (292 aa).

Residues 64–65, Arg86, and Asn190 each bind substrate; that span reads GG.

The protein belongs to the acetylglutamate kinase family. ArgB subfamily.

It is found in the cytoplasm. The catalysed reaction is N-acetyl-L-glutamate + ATP = N-acetyl-L-glutamyl 5-phosphate + ADP. Its pathway is amino-acid biosynthesis; L-arginine biosynthesis; N(2)-acetyl-L-ornithine from L-glutamate: step 2/4. Catalyzes the ATP-dependent phosphorylation of N-acetyl-L-glutamate. The protein is Acetylglutamate kinase of Geobacter sp. (strain M21).